Reading from the N-terminus, the 206-residue chain is D-ribitol-5-phosphate phosphatase (206 aa).

Asp8 (nucleophile) is an active-site residue. Mg(2+) contacts are provided by Asp8 and Asp172.

It belongs to the HAD-like hydrolase superfamily. It depends on Mg(2+) as a cofactor.

It catalyses the reaction D-ribitol 1-phosphate + H2O = ribitol + phosphate. The catalysed reaction is D-ribitol 5-phosphate + H2O = ribitol + phosphate. The enzyme catalyses 5-amino-6-(5-phospho-D-ribitylamino)uracil + H2O = 5-amino-6-(D-ribitylamino)uracil + phosphate. Its pathway is cofactor biosynthesis; riboflavin biosynthesis; 5-amino-6-(D-ribitylamino)uracil from GTP: step 4/4. Functionally, catalyzes the dephosphorylation of D-ribitol-5-phosphate and D-ribitol-1-phosphate. Is also able to dephosphorylate 5-amino-6-(5-phospho-D-ribitylamino)uracil, and thus could be involved in the riboflavin biosynthesis pathway. This is D-ribitol-5-phosphate phosphatase from Bacteroides thetaiotaomicron (strain ATCC 29148 / DSM 2079 / JCM 5827 / CCUG 10774 / NCTC 10582 / VPI-5482 / E50).